Here is a 255-residue protein sequence, read N- to C-terminus: Alpha-acetolactate decarboxylase (255 aa).

This sequence belongs to the alpha-acetolactate decarboxylase family.

The enzyme catalyses (2S)-2-acetolactate + H(+) = (R)-acetoin + CO2. The protein operates within polyol metabolism; (R,R)-butane-2,3-diol biosynthesis; (R,R)-butane-2,3-diol from pyruvate: step 2/3. Converts acetolactate into acetoin, which can be excreted by the cells. This may be a mechanism for controlling the internal pH of cells in the stationary stage. In Bacillus subtilis (strain 168), this protein is Alpha-acetolactate decarboxylase (alsD).